Here is a 1178-residue protein sequence, read N- to C-terminus: Thrombospondin-2 (1178 aa).

Residues 1–22 (MLQRSRLLWLAVFITLWVSSDA) form the signal peptide. One can recognise a Laminin G-like domain in the interval 25–221 (DAKEEENTFD…LQNIHLIFDT (197 aa)). Residues asparagine 157, asparagine 244, asparagine 317, and asparagine 322 are each glycosylated (N-linked (GlcNAc...) asparagine). In terms of domain architecture, VWFC spans 324-381 (SVCWQDGRVFADSESWIVDSCTKCTCQDSKIVCHQITCPPVSCADPSFIEGECCPVCS). TSP type-1 domains follow at residues 387–437 (EEGW…KKCD), 443–498 (DGGW…APCP), and 500–555 (NGQW…RDCP). Intrachain disulfides connect cysteine 399–cysteine 431, cysteine 403–cysteine 436, cysteine 414–cysteine 421, cysteine 455–cysteine 492, cysteine 459–cysteine 497, cysteine 470–cysteine 482, cysteine 512–cysteine 549, cysteine 516–cysteine 554, cysteine 527–cysteine 539, cysteine 559–cysteine 570, cysteine 564–cysteine 580, cysteine 583–cysteine 594, cysteine 600–cysteine 616, cysteine 607–cysteine 625, cysteine 628–cysteine 652, cysteine 658–cysteine 671, cysteine 665–cysteine 684, cysteine 686–cysteine 697, cysteine 713–cysteine 721, cysteine 726–cysteine 746, cysteine 762–cysteine 782, cysteine 785–cysteine 805, cysteine 821–cysteine 841, cysteine 844–cysteine 864, cysteine 882–cysteine 902, cysteine 918–cysteine 938, and cysteine 954–cysteine 1175. Asparagine 463 carries an N-linked (GlcNAc...) asparagine glycan. Residues 555-595 (PIDGCLSNPCFPGAECNSYPDGSWSCGPCPAGFLGNGTVCE) enclose the EGF-like 1 domain. Asparagine 590 carries an N-linked (GlcNAc...) asparagine glycan. One can recognise an EGF-like 2 domain in the interval 654–698 (PENPCKDKTHSCHKSAECIYLGHFSDPMYKCECRTGYAGDGRICG). TSP type-3 repeat units lie at residues 699-734 (EDSD…NSGQ), 735-770 (EDFD…NPRQ), 771-793 (FDYD…NPAQ), 794-829 (IDTD…NTDQ), 830-852 (SDTD…NPDQ), 853-890 (TDAD…NANQ), 891-926 (ADHD…NPEQ), and 927-962 (EDSD…AISE). The N-linked (GlcNAc...) asparagine glycan is linked to asparagine 716. Residues 737 to 760 (FDKDGKGDACDEDDDNDGVEDDKD) form a disordered region. Acidic residues predominate over residues 746–759 (CDEDDDNDGVEDDK). Residues 852 to 941 (QTDADNDLVG…DGRGDICKDD (90 aa)) are disordered. Residues 853–872 (TDADNDLVGDQCDNNEDIDE) show a composition bias toward acidic residues. The span at 891–901 (ADHDKDGKGDA) shows a compositional bias: basic and acidic residues. Positions 902 to 911 (CDPDDDNDGI) are enriched in acidic residues. Composition is skewed to basic and acidic residues over residues 912–924 (PDDR…RYNP) and 931–940 (GDGRGDICKD). Positions 934-936 (RGD) match the Cell attachment site motif. Residues 966–1178 (RKFQMVPLDP…SDLKYECRDA (213 aa)) form the TSP C-terminal domain. Residue asparagine 1075 is glycosylated (N-linked (GlcNAc...) asparagine).

This sequence belongs to the thrombospondin family. As to quaternary structure, homotrimer; disulfide-linked. Can bind to fibrinogen, fibronectin, laminin and type V collagen.

In terms of biological role, adhesive glycoprotein that mediates cell-to-cell and cell-to-matrix interactions. The protein is Thrombospondin-2 (THBS2) of Gallus gallus (Chicken).